Here is a 420-residue protein sequence, read N- to C-terminus: Glutamyl-tRNA reductase (420 aa).

Residues 49-52 (TCNR), serine 110, 115-117 (EHQ), and glutamine 121 each bind substrate. Cysteine 50 (nucleophile) is an active-site residue. 190–195 (GSGTIN) contributes to the NADP(+) binding site.

It belongs to the glutamyl-tRNA reductase family. As to quaternary structure, homodimer.

It catalyses the reaction (S)-4-amino-5-oxopentanoate + tRNA(Glu) + NADP(+) = L-glutamyl-tRNA(Glu) + NADPH + H(+). It participates in porphyrin-containing compound metabolism; protoporphyrin-IX biosynthesis; 5-aminolevulinate from L-glutamyl-tRNA(Glu): step 1/2. Its function is as follows. Catalyzes the NADPH-dependent reduction of glutamyl-tRNA(Glu) to glutamate 1-semialdehyde (GSA). This Wigglesworthia glossinidia brevipalpis protein is Glutamyl-tRNA reductase.